The following is a 319-amino-acid chain: Plasmodesmata-located protein 4 (319 aa).

The signal sequence occupies residues 1-26 (MVVHLISLLTQTLALIILSLPSIINT). The Extracellular segment spans residues 27-288 (SQLDYDTLVF…EGSKVNTGKS (262 aa)). 6 disulfide bridges follow: Cys-39–Cys-127, Cys-103–Cys-112, Cys-115–Cys-140, Cys-177–Cys-247, Cys-223–Cys-232, and Cys-235–Cys-260. Gnk2-homologous domains lie at 45 to 149 (NILQ…FERI) and 170 to 269 (HGLI…YHPH). A helical transmembrane segment spans residues 289–309 (LAIVVGGVAALVFVAIFFMFL). A necessary and sufficient for plasmodesmal targeting region spans residues 289–309 (LAIVVGGVAALVFVAIFFMFL). The Cytoplasmic segment spans residues 310-319 (KSLRKKGDDC).

The protein belongs to the cysteine-rich repeat secretory protein family. Plasmodesmata-located proteins (PDLD) subfamily. In terms of assembly, (Microbial infection) Interacts with Grapevine fanleaf virus (GFLV) 2B-MP. As to expression, highly expressed in seeds and roots.

It localises to the cell membrane. The protein localises to the cell junction. It is found in the plasmodesma. In terms of biological role, modulates cell-to-cell trafficking. This is Plasmodesmata-located protein 4 from Arabidopsis thaliana (Mouse-ear cress).